The sequence spans 506 residues: UDP-N-acetylglucosamine--peptide N-acetylglucosaminyltransferase GtfA subunit (506 aa).

16–19 (GVEY) serves as a coordination point for UDP. His-241 lines the N-acetyl-D-glucosamine pocket. Residue 384–385 (HK) coordinates UDP. 404–407 (EGFG) is an N-acetyl-D-glucosamine binding site.

It belongs to the glycosyltransferase group 1 family. Glycosyltransferase 4 subfamily. In terms of assembly, interacts with stabilizing protein GtfB (Gtf2), probably as a heterotetramer with 2 subunits each of GtfA and GtfB, part of the accessory SecA2/SecY2 protein translocation apparatus.

It localises to the cytoplasm. The protein resides in the cell membrane. It carries out the reaction L-seryl-[protein] + UDP-N-acetyl-alpha-D-glucosamine = 3-O-[N-acetyl-alpha-D-glucosaminyl]-L-seryl-[protein] + UDP + H(+). It participates in protein modification; protein glycosylation. Required for polymorphic O-glycosylation of the serine-rich repeat protein Srr2. Catalyzes the first step in glycosylation by transferring N-acetylglucosamine from UDP-GlcNAc to serine residues of Srr2. Part of the accessory SecA2/SecY2 system specifically required to export serine-rich repeat proteins, probably Srr2 in this organism. The GtfA-GtfB (Gtf1-Gtf2 in this bacteria) complex adds GlcNAc from UDP-GlcNAc to Srr2 substrate. This subunit has low glycosyltransferase activity; GtfB enhances glycosyltransferase activity in vitro. Upon expression in S.parasanguis GtfA/GtfB restores expression of serine-rich repeat protein Fap1 and complements a biofilm formation defect. This chain is UDP-N-acetylglucosamine--peptide N-acetylglucosaminyltransferase GtfA subunit, found in Streptococcus agalactiae.